Consider the following 132-residue polypeptide: D-ribose pyranase (132 aa).

His-20 serves as the catalytic Proton donor. Residues Asp-28, His-98, and 120-122 each bind substrate; that span reads YAN.

The protein belongs to the RbsD / FucU family. RbsD subfamily. Homodecamer.

Its subcellular location is the cytoplasm. It carries out the reaction beta-D-ribopyranose = beta-D-ribofuranose. It functions in the pathway carbohydrate metabolism; D-ribose degradation; D-ribose 5-phosphate from beta-D-ribopyranose: step 1/2. In terms of biological role, catalyzes the interconversion of beta-pyran and beta-furan forms of D-ribose. The protein is D-ribose pyranase of Geobacillus thermodenitrificans (strain NG80-2).